The following is a 434-amino-acid chain: Probable proline transporter 2 (434 aa).

11 helical membrane-spanning segments follow: residues 26-46 (PWYQ…VLGY), 49-69 (SVMV…AAAI), 106-126 (LTWA…IILA), 149-169 (IALS…LSAL), 171-191 (IWLG…FVLS), 213-233 (IFTT…GMLP), 251-271 (LWFQ…MGYW), 297-317 (LSAF…MYEF), 339-359 (VGVR…LPFL), 362-382 (FMSL…ANHM), and 403-423 (VAGF…LIMV).

This sequence belongs to the amino acid/polyamine transporter 2 family. Amino acid/auxin permease (AAAP) (TC 2.A.18.3) subfamily.

The protein localises to the cell membrane. In terms of biological role, proline transporter that mediates proline transport across the plasma membrane. In Oryza sativa subsp. japonica (Rice), this protein is Probable proline transporter 2.